The sequence spans 955 residues: Sex determination protein fruitless (955 aa).

Disordered regions lie at residues 1-55 and 70-89; these read MMAT…HAHS and IETD…LPLP. Positions 35-55 are enriched in basic residues; sequence PHGHGHLHSHAHAHGHGHAHS. The segment covering 76-89 has biased composition (pro residues); the sequence is APPPPLPPPPLPLP. One can recognise a BTB domain in the interval 131–196; that stretch reads CDVTLACEGE…MYKGEVNVGQ (66 aa). 3 disordered regions span residues 229 to 288, 352 to 526, and 784 to 814; these read LRDS…SMSE, NRSA…LGGG, and ANHQ…SGAG. The segment covering 233–246 has biased composition (polar residues); the sequence is AASSPTGRGPSNYT. 2 stretches are compositionally biased toward basic and acidic residues: residues 258 to 279 and 360 to 379; these read AMRE…DELT and CSDR…RDDL. Residues 387-420 show a composition bias toward low complexity; sequence KDNNNSNSSSTGGNNNNNNNNNNNSSSNNNNSSS. Over residues 421–446 the composition is skewed to basic and acidic residues; it reads NRERNNSGERERERERERERDRDREL. Low complexity-rich tracts occupy residues 464–475 and 790–814; these read SSSNCDNSLSSS and QHPP…SGAG. A C2H2-type zinc finger spans residues 918–941; it reads HECPVCGQKFTRRDNMKAHCKIKH.

Expressed in parts of the adult male brain associated with the courtship song and steps of the male courtship. Also expressed in the larval and pupal male mushroom body and optic lobe. Expressed in pupal female optic lobe.

Its subcellular location is the nucleus. Functionally, probably acts as a transcriptional regulator. Part of the somatic sex determination hierarchy; sex determination genes transformer (tra) and transformer-2 (tra-2) switch fru splicing from the male-specific pattern to the female-specific pattern through activation of the female-specific fru 5'-splice site. Vital for the development of males and females. Controls the development of the male specific abdominal muscle of Lawrence. Plays a role in male courtship behavior and sexual orientation. Enhances male-specific expression of takeout in brain-associated fat body. This Drosophila melanogaster (Fruit fly) protein is Sex determination protein fruitless (fru).